We begin with the raw amino-acid sequence, 319 residues long: Aminoimidazole riboside kinase (319 aa).

D16, G31, and Y101 together coordinate 5-amino-1-(beta-D-ribosyl)imidazole. Residue 158–160 (DVN) participates in ATP binding. 5-amino-1-(beta-D-ribosyl)imidazole is bound at residue R162. K(+) is bound by residues A180, A181, and A183. Positions 187 and 192 each coordinate ATP. G213 lines the K(+) pocket. 220–225 (SLGADG) lines the ATP pocket. K(+)-binding residues include D246 and T248. D252 contributes to the 5-amino-1-(beta-D-ribosyl)imidazole binding site. Catalysis depends on D252, which acts as the Proton acceptor. ATP is bound at residue N281. Residues A287, A290, and G292 each contribute to the K(+) site.

It belongs to the carbohydrate kinase PfkB family. Homodimer.

The enzyme catalyses 5-amino-1-(beta-D-ribosyl)imidazole + ATP = 5-amino-1-(5-phospho-beta-D-ribosyl)imidazole + ADP + H(+). With respect to regulation, potassium may regulate kinase activity. Functionally, phosphorylates 5-amino-1-(beta-D-ribosyl)imidazole (AIRs) to form 5-amino-1-(5-phospho-beta-D-ribosyl)imidazole (AIR), an important intermediate in the purine and thiamine biosynthetic pathways. It allows the use of exogenous aminoimidazole riboside (AIRs) to satisfy the cellular requirement for purines and thiamine. This chain is Aminoimidazole riboside kinase, found in Salmonella typhimurium (strain LT2 / SGSC1412 / ATCC 700720).